A 279-amino-acid chain; its full sequence is ATP synthase gamma chain (279 aa).

This sequence belongs to the ATPase gamma chain family. As to quaternary structure, F-type ATPases have 2 components, CF(1) - the catalytic core - and CF(0) - the membrane proton channel. CF(1) has five subunits: alpha(3), beta(3), gamma(1), delta(1), epsilon(1). CF(0) has three main subunits: a, b and c.

It is found in the cell membrane. In terms of biological role, produces ATP from ADP in the presence of a proton gradient across the membrane. The gamma chain is believed to be important in regulating ATPase activity and the flow of protons through the CF(0) complex. This Mycoplasma pneumoniae (strain ATCC 29342 / M129 / Subtype 1) (Mycoplasmoides pneumoniae) protein is ATP synthase gamma chain.